A 253-amino-acid polypeptide reads, in one-letter code: uncharacterized protein (253 aa).

Positions Met-1–Gly-19 are cleaved as a signal peptide. Cys-20 carries the N-palmitoyl cysteine lipid modification. Residue Cys-20 is the site of S-diacylglycerol cysteine attachment.

The protein belongs to the staphylococcal tandem lipoprotein family.

It is found in the cell membrane. This is an uncharacterized protein from Staphylococcus epidermidis (strain ATCC 12228 / FDA PCI 1200).